Here is a 185-residue protein sequence, read N- to C-terminus: Protein GrpE (185 aa).

Residues 1–11 are compositionally biased toward polar residues; the sequence is MENTQENPTDQ. The disordered stretch occupies residues 1 to 38; it reads MENTQENPTDQTTEETGREAQAAEPAAQAAENAAPAAE. Residues 19–38 are compositionally biased toward low complexity; the sequence is EAQAAEPAAQAAENAAPAAE.

This sequence belongs to the GrpE family. As to quaternary structure, homodimer.

The protein resides in the cytoplasm. Its function is as follows. Participates actively in the response to hyperosmotic and heat shock by preventing the aggregation of stress-denatured proteins, in association with DnaK and GrpE. It is the nucleotide exchange factor for DnaK and may function as a thermosensor. Unfolded proteins bind initially to DnaJ; upon interaction with the DnaJ-bound protein, DnaK hydrolyzes its bound ATP, resulting in the formation of a stable complex. GrpE releases ADP from DnaK; ATP binding to DnaK triggers the release of the substrate protein, thus completing the reaction cycle. Several rounds of ATP-dependent interactions between DnaJ, DnaK and GrpE are required for fully efficient folding. The chain is Protein GrpE from Burkholderia mallei (strain NCTC 10247).